Reading from the N-terminus, the 370-residue chain is ADP-ribosylhydrolase ARH3 (370 aa).

Glu47 serves as a coordination point for Mg(2+). Thr70 carries the phosphothreonine modification. Residues Thr82, Asp83, and Asp84 each contribute to the Mg(2+) site. Residue Asp83 participates in substrate binding. Residues 152 to 158 (KGSYGNG), His188, Leu241, and Ile277 contribute to the substrate site. Mg(2+) contacts are provided by Asp320, Asp322, and Thr323.

Belongs to the ADP-ribosylglycohydrolase family. In terms of assembly, monomer. Mg(2+) is required as a cofactor. Ubiquitous.

It localises to the nucleus. The protein localises to the cytoplasm. It is found in the chromosome. The protein resides in the mitochondrion matrix. The enzyme catalyses [(1''-&gt;2')-ADP-alpha-D-ribose](n) + H2O = [(1''-&gt;2')-ADP-alpha-D-ribose](n-1) + ADP-D-ribose. It carries out the reaction 1''-O-acetyl-ADP-alpha-D-ribose + H2O = ADP-D-ribose + acetate + H(+). The catalysed reaction is O-(ADP-D-ribosyl)-L-seryl-[protein] + H2O = ADP-D-ribose + L-seryl-[protein]. It catalyses the reaction alpha-NAD(+) + H2O = ADP-D-ribose + nicotinamide + H(+). Its activity is regulated as follows. The protein undergoes a dramatic conformational switch from closed to open states upon substrate-binding, which enables specific substrate recognition for the 1''-O-linkage. The glutamate flap (Glu-47) blocks substrate entrance to Mg(2+) in the unliganded closed state. In presence of substrate, Glu-47 is ejected from the active site: this closed-to-open transition significantly widens the substrate-binding channel and precisely positions the scissile 1''-O-linkage for cleavage while securing tightly 2'- and 3'-hydroxyls of ADP-ribose. ADP-ribosylhydrolase that preferentially hydrolyzes the scissile alpha-O-linkage attached to the anomeric C1'' position of ADP-ribose and acts on different substrates, such as proteins ADP-ribosylated on serine and threonine, free poly(ADP-ribose) and O-acetyl-ADP-D-ribose. Specifically acts as a serine mono-ADP-ribosylhydrolase by mediating the removal of mono-ADP-ribose attached to serine residues on proteins, thereby playing a key role in DNA damage response. Serine ADP-ribosylation of proteins constitutes the primary form of ADP-ribosylation of proteins in response to DNA damage. Does not hydrolyze ADP-ribosyl-arginine, -cysteine, -diphthamide, or -asparagine bonds. Also able to degrade protein free poly(ADP-ribose), which is synthesized in response to DNA damage: free poly(ADP-ribose) acts as a potent cell death signal and its degradation by ADPRHL2 protects cells from poly(ADP-ribose)-dependent cell death, a process named parthanatos. Also hydrolyzes free poly(ADP-ribose) in mitochondria. Specifically digests O-acetyl-ADP-D-ribose, a product of deacetylation reactions catalyzed by sirtuins. Specifically degrades 1''-O-acetyl-ADP-D-ribose isomer, rather than 2''-O-acetyl-ADP-D-ribose or 3''-O-acetyl-ADP-D-ribose isomers. The polypeptide is ADP-ribosylhydrolase ARH3 (Adprs) (Mus musculus (Mouse)).